The following is a 456-amino-acid chain: Bifunctional protein GlmU (456 aa).

Residues 1–229 form a pyrophosphorylase region; it reads MLNNAMSVVI…LSEVEGVNNR (229 aa). UDP-N-acetyl-alpha-D-glucosamine contacts are provided by residues 11 to 14, K25, Q76, 81 to 82, 103 to 105, G140, E154, N169, and N227; these read LAAG, GT, and YGD. D105 provides a ligand contact to Mg(2+). N227 provides a ligand contact to Mg(2+). A linker region spans residues 230-250; the sequence is LQLSRLERVYQSEQAEKLLLA. Positions 251–456 are N-acetyltransferase; the sequence is GVMLRDPARF…EGWRRPVKKK (206 aa). UDP-N-acetyl-alpha-D-glucosamine-binding residues include R333 and K351. Residue H363 is the Proton acceptor of the active site. 2 residues coordinate UDP-N-acetyl-alpha-D-glucosamine: Y366 and N377. Acetyl-CoA-binding positions include A380, 386–387, S405, A423, and R440; that span reads NY.

It in the N-terminal section; belongs to the N-acetylglucosamine-1-phosphate uridyltransferase family. The protein in the C-terminal section; belongs to the transferase hexapeptide repeat family. In terms of assembly, homotrimer. Mg(2+) serves as cofactor.

Its subcellular location is the cytoplasm. It carries out the reaction alpha-D-glucosamine 1-phosphate + acetyl-CoA = N-acetyl-alpha-D-glucosamine 1-phosphate + CoA + H(+). The enzyme catalyses N-acetyl-alpha-D-glucosamine 1-phosphate + UTP + H(+) = UDP-N-acetyl-alpha-D-glucosamine + diphosphate. The protein operates within nucleotide-sugar biosynthesis; UDP-N-acetyl-alpha-D-glucosamine biosynthesis; N-acetyl-alpha-D-glucosamine 1-phosphate from alpha-D-glucosamine 6-phosphate (route II): step 2/2. It functions in the pathway nucleotide-sugar biosynthesis; UDP-N-acetyl-alpha-D-glucosamine biosynthesis; UDP-N-acetyl-alpha-D-glucosamine from N-acetyl-alpha-D-glucosamine 1-phosphate: step 1/1. It participates in bacterial outer membrane biogenesis; LPS lipid A biosynthesis. In terms of biological role, catalyzes the last two sequential reactions in the de novo biosynthetic pathway for UDP-N-acetylglucosamine (UDP-GlcNAc). The C-terminal domain catalyzes the transfer of acetyl group from acetyl coenzyme A to glucosamine-1-phosphate (GlcN-1-P) to produce N-acetylglucosamine-1-phosphate (GlcNAc-1-P), which is converted into UDP-GlcNAc by the transfer of uridine 5-monophosphate (from uridine 5-triphosphate), a reaction catalyzed by the N-terminal domain. In Escherichia coli (strain 55989 / EAEC), this protein is Bifunctional protein GlmU.